A 1316-amino-acid polypeptide reads, in one-letter code: Tetratricopeptide repeat protein 21B (1316 aa).

TPR repeat units lie at residues 108 to 141 (EKAL…SDGS), 145 to 178 (HVLK…GNDT), 180 to 211 (ALLG…FPSF), 285 to 323 (AQLF…NPQQ), 324 to 357 (SEFA…DETS), 492 to 525 (LQTV…NPSY), 563 to 596 (PLYH…PGMK), 617 to 650 (LSIF…FSGT), 722 to 755 (PRSF…NPKD), 757 to 789 (TLAS…GQKN), 791 to 822 (LCYD…EPVN), 831 to 864 (GRCQ…QARV), 884 to 917 (AEIC…CETD), 919 to 951 (KIML…DQDN), 952 to 985 (EAAT…KPDN), 1023 to 1056 (PGFQ…RDWG), 1197 to 1230 (EKSW…NRSC), 1232 to 1264 (KAYE…SNRT), and 1266 to 1299 (PAVG…HPTY).

This sequence belongs to the TTC21 family. Component of the IFT complex A (IFT-A) complex. IFT-A complex is divided into a core subcomplex composed of IFT122:IFT140:WDR19 which is associated with TULP3 and a peripheral subcomplex composed of IFT43:WDR35:TTC21B. Interacts directy with WDR35 and TTC21B. Interacts with TTC25.

The protein resides in the cytoplasm. Its subcellular location is the cytoskeleton. It localises to the cilium axoneme. Functionally, component of the IFT complex A (IFT-A), a complex required for retrograde ciliary transport and entry into cilia of G protein-coupled receptors (GPCRs). Essential for retrograde trafficking of IFT-1, IFT-B and GPCRs. Negatively modulates the SHH signal transduction. The sequence is that of Tetratricopeptide repeat protein 21B from Homo sapiens (Human).